Here is a 193-residue protein sequence, read N- to C-terminus: Ion-translocating oxidoreductase complex subunit B (193 aa).

Residues M1–S23 are hydrophobic. Residues E29–V87 form the 4Fe-4S domain. C46, C49, C54, C70, C110, C113, C116, C120, C140, C143, C146, and C150 together coordinate [4Fe-4S] cluster. 4Fe-4S ferredoxin-type domains lie at K101–K130 and A131–V160.

The protein belongs to the 4Fe4S bacterial-type ferredoxin family. RnfB subfamily. The complex is composed of six subunits: RnfA, RnfB, RnfC, RnfD, RnfE and RnfG. [4Fe-4S] cluster is required as a cofactor.

Its subcellular location is the cell inner membrane. Functionally, part of a membrane-bound complex that couples electron transfer with translocation of ions across the membrane. This is Ion-translocating oxidoreductase complex subunit B from Haemophilus influenzae (strain 86-028NP).